A 269-amino-acid chain; its full sequence is Lysyl endopeptidase (269 aa).

3 disulfide bridges follow: Cys6-Cys216, Cys12-Cys80, and Cys36-Cys58. Active-site charge relay system residues include His57, Asp113, and Ser194.

It belongs to the peptidase S1 family.

It is found in the secreted. The catalysed reaction is Preferential cleavage: Lys-|-Xaa, including Lys-|-Pro.. Functionally, highly specific endopeptidase that hydrolyzes lysyl bonds including the Lys-Pro bond. This is Lysyl endopeptidase from Lysobacter enzymogenes.